We begin with the raw amino-acid sequence, 194 residues long: Peptidyl-tRNA hydrolase (194 aa).

Tyrosine 17 lines the tRNA pocket. Histidine 22 acts as the Proton acceptor in catalysis. TRNA contacts are provided by phenylalanine 68, asparagine 70, and asparagine 116.

This sequence belongs to the PTH family. In terms of assembly, monomer.

The protein localises to the cytoplasm. It catalyses the reaction an N-acyl-L-alpha-aminoacyl-tRNA + H2O = an N-acyl-L-amino acid + a tRNA + H(+). In terms of biological role, hydrolyzes ribosome-free peptidyl-tRNAs (with 1 or more amino acids incorporated), which drop off the ribosome during protein synthesis, or as a result of ribosome stalling. Functionally, catalyzes the release of premature peptidyl moieties from peptidyl-tRNA molecules trapped in stalled 50S ribosomal subunits, and thus maintains levels of free tRNAs and 50S ribosomes. The chain is Peptidyl-tRNA hydrolase from Histophilus somni (strain 129Pt) (Haemophilus somnus).